The sequence spans 167 residues: MMLKQAAKKALGLTSRQSTPWSVGILRTYHENVIDHYDNPRNVGSFDKNDPNVGTGLVGAPACGDVMKLQIKVDEKTGQIVDARFKTFGCGSAIASSSVATEWVKGKAMEDVLTIKNTEIAKHLSLPPVKLHCSMLAEDAIKAAVKDYKEKRVKTNGAAAAGETTQA.

A mitochondrion-targeting transit peptide spans 1-50 (MMLKQAAKKALGLTSRQSTPWSVGILRTYHENVIDHYDNPRNVGSFDKND).

It belongs to the NifU family. Component of the core Fe-S cluster (ISC) assembly machinery. Interacts with HSCB. The cofactor is [2Fe-2S] cluster. In terms of tissue distribution, expressed in roots, stems, leaves, flowers, pollen and siliques.

Its subcellular location is the mitochondrion matrix. It is found in the cytoplasm. It localises to the cytosol. Its pathway is cofactor biosynthesis; iron-sulfur cluster biosynthesis. Its function is as follows. Scaffold protein for the de novo synthesis of iron-sulfur (Fe-S) clusters within mitochondria, which is required for maturation of both mitochondrial and cytoplasmic [2Fe-2S] and [4Fe-4S] proteins. First, a [2Fe-2S] cluster is transiently assembled on the scaffold protein ISCU (ISU1, ISU2 or ISU3). In a second step, the cluster is released from ISCU, transferred to a glutaredoxin, followed by the formation of mitochondrial [2Fe-2S] proteins, the synthesis of [4Fe-4S] clusters and their target-specific insertion into the recipient apoproteins. Cluster assembly on ISCU depends on the function of the cysteine desulfurase complex NFS1-ISD11, which serves as the sulfur donor for cluster synthesis, the iron-binding protein frataxin as the putative iron donor, and the electron transfer chain comprised of ferredoxin reductase and ferredoxin, which receive their electrons from NADH. This Arabidopsis thaliana (Mouse-ear cress) protein is Iron-sulfur cluster assembly protein 1 (ISU1).